The following is a 179-amino-acid chain: Adenine phosphoribosyltransferase (179 aa).

Belongs to the purine/pyrimidine phosphoribosyltransferase family. In terms of assembly, homodimer.

The protein resides in the cytoplasm. It carries out the reaction AMP + diphosphate = 5-phospho-alpha-D-ribose 1-diphosphate + adenine. It functions in the pathway purine metabolism; AMP biosynthesis via salvage pathway; AMP from adenine: step 1/1. Its function is as follows. Catalyzes a salvage reaction resulting in the formation of AMP, that is energically less costly than de novo synthesis. The chain is Adenine phosphoribosyltransferase from Bradyrhizobium sp. (strain BTAi1 / ATCC BAA-1182).